The primary structure comprises 544 residues: Intercellular adhesion molecule 3 (544 aa).

The N-terminal stretch at 1–31 is a signal peptide; sequence MIASGPPPRVYWTSLIFLLLACCLLPTGAQG. Residues 32–486 lie on the Extracellular side of the membrane; the sequence is QTYQVRVEPK…MMDVQGRNPV (455 aa). Residues 48 to 105 enclose the Ig-like C2-type 1 domain; the sequence is GEPLVVNCTLDCPGPGLISLETALSKEPHSRGLGWAAFRLTNVTGDMEILCSGICNKS. Residues Asn-54, Asn-89, Asn-103, Asn-112, Asn-138, Asn-190, Asn-209, Asn-243, Asn-267, Asn-296, Asn-321, and Asn-326 are each glycosylated (N-linked (GlcNAc...) asparagine). 2 disulfides stabilise this stretch: Cys-55–Cys-98 and Cys-59–Cys-102. The 67-residue stretch at 134 to 200 folds into the Ig-like C2-type 2 domain; that stretch reads GEELNLSCLV…FSCRSELDLR (67 aa). A disulfide bond links Cys-141 and Cys-193. The Ig-like C2-type 3 domain occupies 237–302; the sequence is ETSWPVNCSL…IVCNVTLGVE (66 aa). A disulfide bridge connects residues Cys-244 and Cys-295. Residues 330–383 enclose the Ig-like C2-type 4 domain; that stretch reads GTPVTVTCAAGPQVQVMLDGVPAAVPGQPAQLQLKATEMDDRRTFFCNATLKVH. A disulfide bridge links Cys-337 with Cys-376. Asn-377, Asn-390, and Asn-456 each carry an N-linked (GlcNAc...) asparagine glycan. In terms of domain architecture, Ig-like C2-type 5 spans 417–470; the sequence is KTMHILQCQARGNPNPQLQCLREGSKFKVPVGIPFLVLLNYSGTYSCQAASSRG. Cys-424 and Cys-463 form a disulfide bridge. The chain crosses the membrane as a helical span at residues 487-511; it reads TINIVLGVLAILGLVTLAAASVYVF. Residues 512–544 lie on the Cytoplasmic side of the membrane; that stretch reads WVQRQHDIYHLTPRSTRWRLTSTQPVTVAEELS.

The protein belongs to the immunoglobulin superfamily. ICAM family. Interacts with moesin/MSN. Leukocytes.

The protein resides in the membrane. In terms of biological role, ICAM proteins are ligands for the leukocyte adhesion protein LFA-1 (integrin alpha-L/beta-2). ICAM3 is also a ligand for integrin alpha-D/beta-2. In association with integrin alpha-L/beta-2, contributes to apoptotic neutrophil phagocytosis by macrophages. The protein is Intercellular adhesion molecule 3 (ICAM3) of Bos taurus (Bovine).